The chain runs to 100 residues: Urease subunit gamma (100 aa).

Belongs to the urease gamma subunit family. Heterotrimer of UreA (gamma), UreB (beta) and UreC (alpha) subunits. Three heterotrimers associate to form the active enzyme.

The protein resides in the cytoplasm. It carries out the reaction urea + 2 H2O + H(+) = hydrogencarbonate + 2 NH4(+). Its pathway is nitrogen metabolism; urea degradation; CO(2) and NH(3) from urea (urease route): step 1/1. This chain is Urease subunit gamma, found in Acinetobacter baylyi (strain ATCC 33305 / BD413 / ADP1).